The primary structure comprises 126 residues: Copper resistance protein C (126 aa).

The signal sequence occupies residues 1 to 24 (MLLNRTSFVTLFAAGMLVSALAQA). Histidine 25 contributes to the Cu(2+) binding site. 5 residues coordinate Cu(+): methionine 64, methionine 67, methionine 70, histidine 72, and methionine 75. Residue histidine 115 participates in Cu(2+) binding.

This sequence belongs to the CopC family. Monomer.

Its subcellular location is the periplasm. The redox state of copper bound to CopC may act as a switch between the possible trafficking pathways of the metal ion. Copper-binding protein involved in copper resistance and homeostasis. Probably mediates copper resistance by sequestering the excess of copper in the periplasm. May act as a copper carrier in the oxidizing periplasmic space that exchanges either Cu(I) or Cu(II) with its putative partners CopA, CopB and CopD. The protein is Copper resistance protein C of Pseudomonas syringae pv. tomato.